The chain runs to 822 residues: Tyrosine-protein kinase Fer (822 aa).

Positions Met1 to Glu259 constitute an F-BAR domain. The important for interaction with membranes containing phosphoinositides stretch occupies residues Met1–Leu300. Coiled coils occupy residues Ala123 to Tyr185 and Thr301 to Glu390. A Phosphotyrosine modification is found at Tyr402. Ser434 carries the post-translational modification Phosphoserine. The 91-residue stretch at Trp460–Ile550 folds into the SH2 domain. Residues Val563–Ile816 enclose the Protein kinase domain. Residues Leu569–Val577 and Lys591 each bind ATP. At Tyr615 the chain carries Phosphotyrosine; by autocatalysis. The active-site Proton acceptor is Asp684. The residue at position 714 (Tyr714) is a Phosphotyrosine; by autocatalysis.

The protein belongs to the protein kinase superfamily. Tyr protein kinase family. Fes/fps subfamily. As to quaternary structure, homotrimer. Interacts with ARHGDIA, IRS1, JAK1, NRP1, PIK3R1, PLEC and TMF1. Interacts with PPP1CA and regulates its phosphorylation at 'Thr-320'. Interacts with CTNND1, EGFR, FLT3, PECAM1, PDGFR and STAT3. Interacts (via SH2 domain) with CTTN. Interacts with HSP90; this stabilizes phosphorylated FER and protects FER against proteasomal degradation. Component of a complex that contains at least FER, CTTN and PTK2/FAK1. In terms of processing, autophosphorylated. Post-translationally, polyubiquitinated; this leads to proteasomal degradation. Isoform 1 is detected in normal colon and in fibroblasts (at protein level). Isoform 3 is detected in normal testis, in colon carcinoma-derived metastases in lung, liver and ovary, and in colon carcinoma and hepato carcinoma cell lines (at protein level). Isoform 3 is not detected in normal colon or in normal fibroblasts (at protein level). Widely expressed.

Its subcellular location is the cytoplasm. It is found in the cytoskeleton. The protein localises to the cell membrane. It localises to the cell projection. The protein resides in the cell junction. Its subcellular location is the membrane. It is found in the nucleus. The protein localises to the cell cortex. The enzyme catalyses L-tyrosyl-[protein] + ATP = O-phospho-L-tyrosyl-[protein] + ADP + H(+). With respect to regulation, activated by phosphatidic acid binding. Activated by hydrogen peroxide (in vitro). Activated by reactive oxygen species (ROS). In terms of biological role, tyrosine-protein kinase that acts downstream of cell surface receptors for growth factors and plays a role in the regulation of the actin cytoskeleton, microtubule assembly, lamellipodia formation, cell adhesion, cell migration and chemotaxis. Acts downstream of EGFR, KIT, PDGFRA and PDGFRB. Acts downstream of EGFR to promote activation of NF-kappa-B and cell proliferation. May play a role in the regulation of the mitotic cell cycle. Plays a role in the insulin receptor signaling pathway and in activation of phosphatidylinositol 3-kinase. Acts downstream of the activated FCER1 receptor and plays a role in FCER1 (high affinity immunoglobulin epsilon receptor)-mediated signaling in mast cells. Plays a role in the regulation of mast cell degranulation. Plays a role in leukocyte recruitment and diapedesis in response to bacterial lipopolysaccharide (LPS). Plays a role in synapse organization, trafficking of synaptic vesicles, the generation of excitatory postsynaptic currents and neuron-neuron synaptic transmission. Plays a role in neuronal cell death after brain damage. Phosphorylates CTTN, CTNND1, PTK2/FAK1, GAB1, PECAM1 and PTPN11. May phosphorylate JUP and PTPN1. Can phosphorylate STAT3, but the biological relevance of this depends on cell type and stimulus. The sequence is that of Tyrosine-protein kinase Fer (FER) from Homo sapiens (Human).